The chain runs to 310 residues: Protein N-terminal asparagine amidohydrolase (310 aa).

Monomer.

The protein resides in the cytoplasm. It catalyses the reaction N-terminal L-asparaginyl-[protein] + H2O + H(+) = N-terminal L-aspartyl-[protein] + NH4(+). Inhibited by micromolar concentrations of copper and zinc ions. Its function is as follows. N-terminal asparagine deamidase that mediates deamidation of N-terminal asparagine residues to aspartate. Required for the ubiquitin-dependent turnover of intracellular proteins that initiate with Met-Asn. These proteins are acetylated on the retained initiator methionine and can subsequently be modified by the removal of N-acetyl methionine by acylaminoacid hydrolase (AAH). Conversion of the resulting N-terminal asparagine to aspartate by NTAN1/PNAD renders the protein susceptible to arginylation, polyubiquitination and degradation as specified by the N-end rule. This enzyme does not act on substrates with internal or C-terminal asparagines and does not act on glutamine residues in any position, nor on acetylated N-terminal peptidyl Asn. The chain is Protein N-terminal asparagine amidohydrolase (NTAN1) from Homo sapiens (Human).